A 185-amino-acid polypeptide reads, in one-letter code: Homeobox expressed in ES cells 1 (185 aa).

The segment at residues 108 to 167 (GRRPRTAFTQNQIEVLENVFRVNCYPGIDIREDLAQKLNLEEDRIQIWFQNRRAKLKRSH) is a DNA-binding region (homeobox).

Belongs to the ANF homeobox family. In terms of assembly, can form heterodimers with PROP1 in binding to DNA. Interacts with TLE1.

It localises to the nucleus. Its function is as follows. Required for the normal development of the forebrain, eyes and other anterior structures such as the olfactory placodes and pituitary gland. Possible transcriptional repressor. Binds to the palindromic PIII sequence, 5'-AGCTTGAGTCTAATTGAATTAACTGTAC-3'. HESX1 and PROP1 bind as heterodimers on this palindromic site, and, in vitro, HESX1 can antagonize PROP1 activation. This chain is Homeobox expressed in ES cells 1 (HESX1), found in Pan troglodytes (Chimpanzee).